The following is a 274-amino-acid chain: Diaminopimelate epimerase (274 aa).

N11, Q44, and N64 together coordinate substrate. C73 acts as the Proton donor in catalysis. Substrate is bound by residues 74-75 (GN), N157, N190, and 208-209 (ER). C217 functions as the Proton acceptor in the catalytic mechanism. 218-219 (GS) lines the substrate pocket.

Belongs to the diaminopimelate epimerase family. Homodimer.

The protein resides in the cytoplasm. It catalyses the reaction (2S,6S)-2,6-diaminopimelate = meso-2,6-diaminopimelate. It functions in the pathway amino-acid biosynthesis; L-lysine biosynthesis via DAP pathway; DL-2,6-diaminopimelate from LL-2,6-diaminopimelate: step 1/1. Its function is as follows. Catalyzes the stereoinversion of LL-2,6-diaminopimelate (L,L-DAP) to meso-diaminopimelate (meso-DAP), a precursor of L-lysine and an essential component of the bacterial peptidoglycan. This is Diaminopimelate epimerase from Cronobacter sakazakii (strain ATCC BAA-894) (Enterobacter sakazakii).